An 801-amino-acid polypeptide reads, in one-letter code: Disks large homolog 4 (801 aa).

The L27 domain occupies 4–60 (KREDTERALQAMEACQSAGDEGFRTRAERLLTIFQSDLFQALLDIQEFYELTVFENQ). PDZ domains are found at residues 153 to 240 (EITL…LRHK) and 248 to 335 (ELKL…AKTL). A disordered region spans residues 339–373 (HHQDAYNPPDITSSYSPHMDMSDYPQALSPSSPRR). The region spanning 393–474 (RVVIHRGSTG…TVTIITQYRP (82 aa)) is the PDZ 3 domain. The 71-residue stretch at 507–577 (KRSFFIRALF…PSKRRVERKE (71 aa)) folds into the SH3 domain. Residues 610–786 (ARPVIILGPS…IYHHVKSVIE (177 aa)) form the Guanylate kinase-like domain.

It belongs to the MAGUK family. Post-translationally, ubiquitinated by MDM2 in response to NMDA receptor activation, leading to proteasome-mediated degradation of DLG4 which is required for AMPA receptor endocytosis. In terms of processing, palmitoylated. Palmitoylation is required for targeting to postsynaptic density, plasma membrane and synapses.

Its subcellular location is the cell membrane. It localises to the postsynaptic density. The protein resides in the synapse. In terms of biological role, postsynaptic scaffolding protein that plays a critical role in synaptogenesis and synaptic plasticity by providing a platform for the postsynaptic clustering of crucial synaptic proteins. This is Disks large homolog 4 (dlg4) from Danio rerio (Zebrafish).